Here is a 380-residue protein sequence, read N- to C-terminus: Glucose-1-phosphate adenylyltransferase (380 aa).

Alpha-D-glucose 1-phosphate is bound by residues Gly164, 179-180, and Ser190; that span reads EK.

This sequence belongs to the bacterial/plant glucose-1-phosphate adenylyltransferase family. As to quaternary structure, homotetramer.

It catalyses the reaction alpha-D-glucose 1-phosphate + ATP + H(+) = ADP-alpha-D-glucose + diphosphate. It participates in glycan biosynthesis; glycogen biosynthesis. Involved in the biosynthesis of ADP-glucose, a building block required for the elongation reactions to produce glycogen. Catalyzes the reaction between ATP and alpha-D-glucose 1-phosphate (G1P) to produce pyrophosphate and ADP-Glc. In Streptococcus gordonii (strain Challis / ATCC 35105 / BCRC 15272 / CH1 / DL1 / V288), this protein is Glucose-1-phosphate adenylyltransferase.